Reading from the N-terminus, the 150-residue chain is Large ribosomal subunit protein bL9 (150 aa).

It belongs to the bacterial ribosomal protein bL9 family.

Binds to the 23S rRNA. This chain is Large ribosomal subunit protein bL9, found in Streptococcus agalactiae serotype Ia (strain ATCC 27591 / A909 / CDC SS700).